A 588-amino-acid polypeptide reads, in one-letter code: DNA ligase (588 aa).

Glu-250 is a binding site for ATP. Residue Lys-252 is the N6-AMP-lysine intermediate of the active site. Positions 257, 272, 302, 342, 417, and 423 each coordinate ATP.

This sequence belongs to the ATP-dependent DNA ligase family. Requires Mg(2+) as cofactor.

The catalysed reaction is ATP + (deoxyribonucleotide)n-3'-hydroxyl + 5'-phospho-(deoxyribonucleotide)m = (deoxyribonucleotide)n+m + AMP + diphosphate.. Functionally, DNA ligase that seals nicks in double-stranded DNA during DNA replication, DNA recombination and DNA repair. The protein is DNA ligase of Nitrosopumilus maritimus (strain SCM1).